A 581-amino-acid polypeptide reads, in one-letter code: Proline--tRNA ligase (581 aa).

This sequence belongs to the class-II aminoacyl-tRNA synthetase family. ProS type 1 subfamily. Homodimer.

It is found in the cytoplasm. It carries out the reaction tRNA(Pro) + L-proline + ATP = L-prolyl-tRNA(Pro) + AMP + diphosphate. Catalyzes the attachment of proline to tRNA(Pro) in a two-step reaction: proline is first activated by ATP to form Pro-AMP and then transferred to the acceptor end of tRNA(Pro). As ProRS can inadvertently accommodate and process non-cognate amino acids such as alanine and cysteine, to avoid such errors it has two additional distinct editing activities against alanine. One activity is designated as 'pretransfer' editing and involves the tRNA(Pro)-independent hydrolysis of activated Ala-AMP. The other activity is designated 'posttransfer' editing and involves deacylation of mischarged Ala-tRNA(Pro). The misacylated Cys-tRNA(Pro) is not edited by ProRS. The sequence is that of Proline--tRNA ligase from Paracidovorax citrulli (strain AAC00-1) (Acidovorax citrulli).